Here is a 622-residue protein sequence, read N- to C-terminus: Transcription factor SKN7 (622 aa).

Residues 1–12 (MSFSTINSNVNK) are compositionally biased toward polar residues. The tract at residues 1 to 29 (MSFSTINSNVNKTTGDSNNNTTENSSTAD) is disordered. A compositionally biased stretch (low complexity) spans 13 to 27 (TTGDSNNNTTENSST). The segment at 84–190 (ANEFVRKLFR…GLDNIKRKIP (107 aa)) is DNA-binding domain. The interval 212-303 (TNPNNPSGSL…NNFNTLCSTL (92 aa)) is hydrophobic repeat HR-A/B. Residues 240-260 (FGNLRRRVDKLQKELDMSKME) are a coiled coil. The 115-residue stretch at 378–492 (HVLLVEDDAV…DLHSILIRYL (115 aa)) folds into the Response regulatory domain. At D427 the chain carries 4-aspartylphosphate. 2 disordered regions span residues 501 to 579 (QQLP…QHHN) and 599 to 622 (TVPHSSMGSTPQLPQSTLQENQLS). Low complexity predominate over residues 512-527 (THSNTNTANSNPNTIN). Over residues 537-554 (DNPSTTTPVTPGASISSA) the composition is skewed to polar residues. Residues 555–578 (QHVQQGQQEQQHQIFHAQQQQQHH) are compositionally biased toward low complexity. A compositionally biased stretch (polar residues) spans 600–622 (VPHSSMGSTPQLPQSTLQENQLS).

This sequence belongs to the SKN7 family. As to quaternary structure, homotrimer. Post-translationally, the phosphorelay mechanism involves the sequential transfer of a phosphate group from 'His-576' (H1) to 'Asp-1144' (D1) of SLN1, then to 'His-64' (H2) of YPD1 and finally to Asp-427 (D2) of SKN7.

Its subcellular location is the nucleus. Transcription factor that is part of a SLN1-YPD1-SKN7 two-component regulatory system, which controls gene expression in response to changes in the osmolarity of the extracellular environment. Under low osmotic conditions, phosphorylated and activated by the phosphorelay intermediate protein YPD1. Also activated in response to oxidative stress, independent on the two-component regulatory system. Regulates heat shock genes in response to oxidative stress and genes involved in cell wall integrity in response to osmotic changes. In Saccharomyces cerevisiae (strain ATCC 204508 / S288c) (Baker's yeast), this protein is Transcription factor SKN7 (SKN7).